Reading from the N-terminus, the 43-residue chain is Cytochrome b559 subunit beta (43 aa).

The helical transmembrane segment at 18–34 threads the bilayer; sequence WLAVHTLAVPSVFFLGA. His-22 serves as a coordination point for heme.

It belongs to the PsbE/PsbF family. As to quaternary structure, heterodimer of an alpha subunit and a beta subunit. PSII is composed of 1 copy each of membrane proteins PsbA, PsbB, PsbC, PsbD, PsbE, PsbF, PsbH, PsbI, PsbJ, PsbK, PsbL, PsbM, PsbT, PsbX, PsbY, PsbZ, Psb30/Ycf12, peripheral proteins PsbO, CyanoQ (PsbQ), PsbU, PsbV and a large number of cofactors. It forms dimeric complexes. Requires heme b as cofactor.

The protein localises to the cellular thylakoid membrane. Functionally, this b-type cytochrome is tightly associated with the reaction center of photosystem II (PSII). PSII is a light-driven water:plastoquinone oxidoreductase that uses light energy to abstract electrons from H(2)O, generating O(2) and a proton gradient subsequently used for ATP formation. It consists of a core antenna complex that captures photons, and an electron transfer chain that converts photonic excitation into a charge separation. The polypeptide is Cytochrome b559 subunit beta (Picosynechococcus sp. (strain ATCC 27264 / PCC 7002 / PR-6) (Agmenellum quadruplicatum)).